Reading from the N-terminus, the 366-residue chain is Chorismate synthase (366 aa).

Residues Arg48 and Arg54 each contribute to the NADP(+) site. FMN is bound by residues 125-127, 238-239, Gly278, 293-297, and Arg319; these read RSS, NA, and KPTSS.

It belongs to the chorismate synthase family. As to quaternary structure, homotetramer. FMNH2 serves as cofactor.

It carries out the reaction 5-O-(1-carboxyvinyl)-3-phosphoshikimate = chorismate + phosphate. It functions in the pathway metabolic intermediate biosynthesis; chorismate biosynthesis; chorismate from D-erythrose 4-phosphate and phosphoenolpyruvate: step 7/7. Catalyzes the anti-1,4-elimination of the C-3 phosphate and the C-6 proR hydrogen from 5-enolpyruvylshikimate-3-phosphate (EPSP) to yield chorismate, which is the branch point compound that serves as the starting substrate for the three terminal pathways of aromatic amino acid biosynthesis. This reaction introduces a second double bond into the aromatic ring system. The protein is Chorismate synthase of Burkholderia ambifaria (strain MC40-6).